Reading from the N-terminus, the 411-residue chain is 4-coumarate--CoA ligase (411 aa).

The protein belongs to the ATP-dependent AMP-binding enzyme family.

It catalyses the reaction (E)-4-coumarate + ATP + CoA = (E)-4-coumaroyl-CoA + AMP + diphosphate. Functionally, converts p-coumaric acid into p-coumaryl CoA. This is necessary for the activation of the photoactive yellow protein (PYP) chromophore. In Cereibacter sphaeroides (strain ATCC 17023 / DSM 158 / JCM 6121 / CCUG 31486 / LMG 2827 / NBRC 12203 / NCIMB 8253 / ATH 2.4.1.) (Rhodobacter sphaeroides), this protein is 4-coumarate--CoA ligase (pcl).